The sequence spans 408 residues: uncharacterized protein (408 aa).

Residues Asn376–Asn386 are compositionally biased toward polar residues. The tract at residues Asn376–Gln408 is disordered. The span at Glu389–Glu401 shows a compositional bias: basic and acidic residues.

This is an uncharacterized protein from Acanthamoeba polyphaga (Amoeba).